The chain runs to 819 residues: Mitosis inhibitor protein kinase SWE1 (819 aa).

Phosphoserine; by CDC5 is present on S36. The residue at position 45 (T45) is a Phosphothreonine; by CDC28. A phosphoserine; by CDC28 mark is found at S56 and S63. Residue S70 is modified to Phosphoserine. Phosphothreonine; by CDC28 is present on T74. Residues K86–S105 are disordered. A compositionally biased stretch (acidic residues) spans E88–S102. S102 carries the phosphoserine; by CDC5 modification. Position 105 is a phosphoserine; by CDC28 (S105). S111 bears the Phosphoserine; by CDC5, CDC28 and CLA4 mark. The interval E117–Q168 is disordered. At S118 the chain carries Phosphoserine; by CDC5. The span at S118 to Q142 shows a compositional bias: polar residues. T121 and T124 each carry phosphothreonine; by CDC28. The residue at position 127 (S127) is a Phosphoserine; by CDC28. Residue T131 is modified to Phosphothreonine; by CDC5. A Phosphoserine; by CDC28 modification is found at S133. S136 bears the Phosphoserine; by CDC28 and CLA4 mark. A phosphoserine; by CDC5 mark is found at S156 and S169. T196 carries the post-translational modification Phosphothreonine; by CDC28. S201 carries the phosphoserine; by CDC28 modification. A phosphoserine; by CDC5 mark is found at S225 and S254. A Phosphoserine modification is found at S262. Phosphoserine; by CDC28 is present on residues S263 and S266. A disordered region spans residues N278 to T297. T280 is modified (phosphothreonine; by CDC5). A phosphoserine mark is found at S284 and S294. Position 312 is a phosphoserine; by CLA4 (S312). The interval P341–S395 is disordered. S345 carries the post-translational modification Phosphoserine. T367 and T373 each carry phosphothreonine; by CDC28. Residue S379 is modified to Phosphoserine; by CDC5 and CLA4. T384 carries the post-translational modification Phosphothreonine; by CDC28. S395 and S438 each carry phosphoserine; by CDC5 and CLA4. The Protein kinase domain occupies F444–L794. ATP-binding positions include I450–V458 and K473. D579 acts as the Proton acceptor in catalysis. 2 residues coordinate Mg(2+): N584 and D597. S610 bears the Phosphoserine; by CDC5 mark. T629 is subject to Phosphothreonine; by CDC5. At T688 the chain carries Phosphothreonine; by CDC5 and CLA4. Position 692 is a phosphothreonine (T692). Over residues S707–H716 the composition is skewed to polar residues. The interval S707 to N736 is disordered. Residues N717 to N736 show a composition bias toward low complexity. K741 participates in a covalent cross-link: Glycyl lysine isopeptide (Lys-Gly) (interchain with G-Cter in ubiquitin).

Belongs to the protein kinase superfamily. Ser/Thr protein kinase family. WEE1 subfamily. Interacts with CLB2-CDC28. Partial hyperphosphorylation of SWE1 by CLB2-CDC28 stabilizes the ternary complex of SWE1 and CLB2-CDC28 and stimulates kinase activity of SWE1 in a positive feedback loop, maintaining CLB2-CDC28 in the tyrosine-phosphorylated state. Fully hyperphosphorylated SWE1 dissociates from CLB2-CDC28. Interacts with HSL7, KCC4 and MET30. Post-translationally, ubiquitinated by the SCF(MET30) complex, leading to its degradation by the proteasome. In terms of processing, phosphorylated progressively by CLA4, CLB2-CDC28 and CDC5. CLA4-dependent phosphorylation occurs in late S phase, followed by phosphorylation by CLB2-CDC28 in early G2, when the levels of mitotic CLB2 increases. This phosphorylation is critical for triggering subsequent SWE1-CDC5 interaction and CDC5-dependent phosphorylation. The resulting cumulative hyperphosphorylation down-regulates SWE1 by targeting it for ubiquitin-mediated degradation. This stepwise phosphorylation is thought to be a mechanism to integrate the different checkpoint requirements before entry into mitosis.

Its subcellular location is the bud neck. It localises to the nucleus. The enzyme catalyses L-seryl-[protein] + ATP = O-phospho-L-seryl-[protein] + ADP + H(+). It catalyses the reaction L-threonyl-[protein] + ATP = O-phospho-L-threonyl-[protein] + ADP + H(+). In terms of biological role, protein kinase that acts as a negative regulator of entry into mitosis (G2 to M transition) by phosphorylating and inhibiting the mitosis-promoting cyclin B-bound CDC28 at 'Tyr-19'. SWE1-mediated inhibition of CDC28 acts in a cell size or morphogenesis checkpoint to delay mitosis in response to defects in growth, actin organization or bud formation. Inhibits the activity of B-type cyclins in replication initiation strongly for CLB2, moderately for CLB3 and CLB4, and there is no apparent inhibition for CLB5 and CLB6, correlating with the normal expression timing of those cyclins. Hyperphosphorylation and degradation of SWE1 when all checkpoint requirement are met releases CLB2-CDC28 from inhibition and allows for progression through the cell cycle. SWE1-dependent CDC28 phosphorylation is also required for pachytene arrest upon activation of the recombination checkpoint during meiosis. Also involved in the regulation of nitrogen starvation- and short chain alcohol-induced filamentous growth, or filamentous differentiation in response to slowed DNA synthesis. Can act both on serines and on tyrosines. The sequence is that of Mitosis inhibitor protein kinase SWE1 (SWE1) from Saccharomyces cerevisiae (strain ATCC 204508 / S288c) (Baker's yeast).